The following is a 69-amino-acid chain: Large ribosomal subunit protein uL29 (69 aa).

This sequence belongs to the universal ribosomal protein uL29 family.

This Rhodopseudomonas palustris (strain TIE-1) protein is Large ribosomal subunit protein uL29.